A 662-amino-acid chain; its full sequence is Glycogen debranching enzyme (662 aa).

The active-site Nucleophile is the Asp-338. Glu-373 functions as the Proton donor in the catalytic mechanism.

This sequence belongs to the glycosyl hydrolase 13 family.

It carries out the reaction Hydrolysis of (1-&gt;6)-alpha-D-glucosidic linkages to branches with degrees of polymerization of three or four glucose residues in limit dextrin.. It participates in glycan degradation; glycogen degradation. Its function is as follows. Removes maltotriose and maltotetraose chains that are attached by 1,6-alpha-linkage to the limit dextrin main chain, generating a debranched limit dextrin. The protein is Glycogen debranching enzyme of Yersinia enterocolitica serotype O:8 / biotype 1B (strain NCTC 13174 / 8081).